Here is a 456-residue protein sequence, read N- to C-terminus: tRNA-2-methylthio-N(6)-dimethylallyladenosine synthase (456 aa).

In terms of domain architecture, MTTase N-terminal spans 1–116 (MTYFFETYGC…FESIFQEIEQ (116 aa)). The [4Fe-4S] cluster site is built by Cys-10, Cys-46, Cys-79, Cys-162, Cys-166, and Cys-169. One can recognise a Radical SAM core domain in the interval 148-384 (SEGSFQSFIP…IALQMSTTLK (237 aa)). Positions 387–452 (RARVGKTLPV…GRTLRAHLVQ (66 aa)) constitute a TRAM domain.

The protein belongs to the methylthiotransferase family. MiaB subfamily. As to quaternary structure, monomer. [4Fe-4S] cluster is required as a cofactor.

Its subcellular location is the cytoplasm. It carries out the reaction N(6)-dimethylallyladenosine(37) in tRNA + (sulfur carrier)-SH + AH2 + 2 S-adenosyl-L-methionine = 2-methylsulfanyl-N(6)-dimethylallyladenosine(37) in tRNA + (sulfur carrier)-H + 5'-deoxyadenosine + L-methionine + A + S-adenosyl-L-homocysteine + 2 H(+). Catalyzes the methylthiolation of N6-(dimethylallyl)adenosine (i(6)A), leading to the formation of 2-methylthio-N6-(dimethylallyl)adenosine (ms(2)i(6)A) at position 37 in tRNAs that read codons beginning with uridine. This Treponema pallidum (strain Nichols) protein is tRNA-2-methylthio-N(6)-dimethylallyladenosine synthase.